The primary structure comprises 143 residues: Hemoglobin subunit alpha-1 (143 aa).

Position 2 is an N-acetylserine (S2). One can recognise a Globin domain in the interval 2–143 (SLSAKDKATV…LALALCEKYR (142 aa)). O2 is bound at residue H60. A heme b-binding site is contributed by H89.

Belongs to the globin family. Hb 1 is a heterotetramer of two alpha-1 and two beta-1 chains. Red blood cells.

Involved in oxygen transport from gills to the various peripheral tissues. The polypeptide is Hemoglobin subunit alpha-1 (hba1) (Boreogadus saida (Polar cod)).